Here is a 110-residue protein sequence, read N- to C-terminus: Class I hydrophobin Po.HYD (110 aa).

A signal peptide spans 1–27 (MFSKATLFFTTVSRYRDTQAPIPTGQT). Disulfide bonds link cysteine 35-cysteine 91, cysteine 42-cysteine 85, cysteine 43-cysteine 75, and cysteine 92-cysteine 105.

It belongs to the fungal hydrophobin family. As to quaternary structure, self-assembles to form functional amyloid fibrils called rodlets. Self-assembly into fibrillar rodlets occurs spontaneously at hydrophobic:hydrophilic interfaces and the rodlets further associate laterally to form amphipathic monolayers.

Its subcellular location is the secreted. The protein localises to the cell wall. Functionally, aerial growth, conidiation, and dispersal of filamentous fungi in the environment rely upon a capability of their secreting small amphipathic proteins called hydrophobins (HPBs) with low sequence identity. Class I can self-assemble into an outermost layer of rodlet bundles on aerial cell surfaces, conferring cellular hydrophobicity that supports fungal growth, development and dispersal; whereas Class II form highly ordered films at water-air interfaces through intermolecular interactions but contribute nothing to the rodlet structure. In Pleurotus ostreatus (Oyster mushroom), this protein is Class I hydrophobin Po.HYD.